The primary structure comprises 160 residues: Transcription elongation factor GreA (160 aa).

Positions 1-72 (MAEKTYPMTQ…QIQILETKIR (72 aa)) form a coiled coil.

The protein belongs to the GreA/GreB family.

Necessary for efficient RNA polymerase transcription elongation past template-encoded arresting sites. The arresting sites in DNA have the property of trapping a certain fraction of elongating RNA polymerases that pass through, resulting in locked ternary complexes. Cleavage of the nascent transcript by cleavage factors such as GreA or GreB allows the resumption of elongation from the new 3'terminus. GreA releases sequences of 2 to 3 nucleotides. The chain is Transcription elongation factor GreA from Streptococcus agalactiae serotype Ia (strain ATCC 27591 / A909 / CDC SS700).